A 336-amino-acid polypeptide reads, in one-letter code: Heme A synthase (336 aa).

5 helical membrane-spanning segments follow: residues 5–25, 92–112, 117–137, 153–173, and 191–211; these read LTRW…VGGI, GRAT…KGII, ILSY…GWYM, LAFH…KLVK, and LIFS…GALV. Heme is bound at residue His255. The next 3 helical transmembrane spans lie at 257–277, 284–304, and 307–327; these read LGAY…LKVK, VAFY…ITLL, and VPII…SVVI. His315 lines the heme pocket.

It belongs to the COX15/CtaA family. Type 2 subfamily. Interacts with CtaB. The cofactor is heme b.

The protein localises to the cell membrane. It carries out the reaction Fe(II)-heme o + 2 A + H2O = Fe(II)-heme a + 2 AH2. It participates in porphyrin-containing compound metabolism; heme A biosynthesis; heme A from heme O: step 1/1. Functionally, catalyzes the conversion of heme O to heme A by two successive hydroxylations of the methyl group at C8. The first hydroxylation forms heme I, the second hydroxylation results in an unstable dihydroxymethyl group, which spontaneously dehydrates, resulting in the formyl group of heme A. In Rickettsia bellii (strain OSU 85-389), this protein is Heme A synthase.